A 562-amino-acid chain; its full sequence is Phosphoglucomutase-1 (562 aa).

M1 carries the post-translational modification N-acetylmethionine. K16 is subject to N6-acetyllysine. R23 contributes to the alpha-D-glucose 1,6-bisphosphate binding site. T115 carries the phosphothreonine modification. Residue S117 coordinates alpha-D-glucose 1,6-bisphosphate. S117 functions as the Phosphoserine intermediate in the catalytic mechanism. S117 lines the Mg(2+) pocket. A phosphoserine mark is found at S117 and S134. At T185 the chain carries Phosphothreonine. S213 is modified (phosphoserine). The Mg(2+) site is built by D288, D290, and D292. Residues D292 and R293 each coordinate alpha-D-glucose 1,6-bisphosphate. K349 bears the N6-acetyllysine mark. Phosphotyrosine is present on Y353. T357 contacts alpha-D-glucose 1,6-bisphosphate. A Phosphoserine modification is found at S369. Residues E376, S378, and K389 each coordinate alpha-D-glucose 1,6-bisphosphate. Phosphoserine is present on S378. K419 is subject to N6-succinyllysine. Residue T467 is modified to Phosphothreonine; by PAK1. A phosphoserine mark is found at S485 and S505. Phosphothreonine is present on T507. 2 positions are modified to phosphoserine: S509 and S541.

The protein belongs to the phosphohexose mutase family. Monomer. Mg(2+) serves as cofactor. Isoform 2 is the major calmodulin-dependent phosphoprotein in junctional skeletal sarcoplasmic reticulum vesicles. Post-translationally, phosphorylation at Thr-467 by PAK1 significantly enhances enzymatic activity.

Its subcellular location is the cytoplasm. It is found in the sarcoplasmic reticulum. The enzyme catalyses alpha-D-glucose 1-phosphate = alpha-D-glucose 6-phosphate. The catalysed reaction is O-phospho-L-seryl-[protein] + alpha-D-glucose 1-phosphate = alpha-D-glucose 1,6-bisphosphate + L-seryl-[protein]. It carries out the reaction alpha-D-glucose 1,6-bisphosphate + L-seryl-[protein] = O-phospho-L-seryl-[protein] + alpha-D-glucose 6-phosphate. Its activity is regulated as follows. Glucose-1,6-bisphosphate enhances phosphorylation of the active site Ser-117, and thereby increases enzyme activity. Catalyzes the reversible isomerization of alpha-D-glucose 1-phosphate to alpha-D-glucose 6-phosphate. The mechanism proceeds via the intermediate compound alpha-D-glucose 1,6-bisphosphate. This enzyme participates in both the breakdown and synthesis of glucose. The sequence is that of Phosphoglucomutase-1 (PGM1) from Oryctolagus cuniculus (Rabbit).